Reading from the N-terminus, the 550-residue chain is Eukaryotic translation initiation factor 3 subunit D-2 (550 aa).

A disordered region spans residues 97–126; the sequence is RGRGFRPSVHNNPRNVRNQRGRKGNAMGNI. Positions 287–301 are RNA gate; that stretch reads KFDMLTVNETSQEPP. The tract at residues 530-550 is disordered; it reads SDVSEEEESSEDKPFGLSMNN.

Belongs to the eIF-3 subunit D family. In terms of assembly, component of the eukaryotic translation initiation factor 3 (eIF-3) complex. The eIF-3 complex interacts with pix.

The protein localises to the cytoplasm. Its function is as follows. mRNA cap-binding component of the eukaryotic translation initiation factor 3 (eIF-3) complex, which is involved in protein synthesis of a specialized repertoire of mRNAs and, together with other initiation factors, stimulates binding of mRNA and methionyl-tRNAi to the 40S ribosome. The eIF-3 complex specifically targets and initiates translation of a subset of mRNAs involved in cell proliferation. In the eIF-3 complex, eif3d specifically recognizes and binds the 7-methylguanosine cap of a subset of mRNAs. This Drosophila willistoni (Fruit fly) protein is Eukaryotic translation initiation factor 3 subunit D-2.